The primary structure comprises 419 residues: Serine hydroxymethyltransferase (419 aa).

Residues leucine 121 and 125 to 127 (GHL) contribute to the (6S)-5,6,7,8-tetrahydrofolate site. The residue at position 230 (lysine 230) is an N6-(pyridoxal phosphate)lysine.

Belongs to the SHMT family. As to quaternary structure, homodimer. The cofactor is pyridoxal 5'-phosphate.

Its subcellular location is the cytoplasm. It carries out the reaction (6R)-5,10-methylene-5,6,7,8-tetrahydrofolate + glycine + H2O = (6S)-5,6,7,8-tetrahydrofolate + L-serine. The protein operates within one-carbon metabolism; tetrahydrofolate interconversion. Its pathway is amino-acid biosynthesis; glycine biosynthesis; glycine from L-serine: step 1/1. In terms of biological role, catalyzes the reversible interconversion of serine and glycine with tetrahydrofolate (THF) serving as the one-carbon carrier. This reaction serves as the major source of one-carbon groups required for the biosynthesis of purines, thymidylate, methionine, and other important biomolecules. Also exhibits THF-independent aldolase activity toward beta-hydroxyamino acids, producing glycine and aldehydes, via a retro-aldol mechanism. This is Serine hydroxymethyltransferase from Vesicomyosocius okutanii subsp. Calyptogena okutanii (strain HA).